Reading from the N-terminus, the 47-residue chain is uncharacterized protein (47 aa).

The ATP-cone domain maps to 2–47 (LRVRKRDGRLEEFSRAKIVRTCLRAGASKKIAEKVAEELKRGYTMG).

This is an uncharacterized protein from Archaeoglobus fulgidus (strain ATCC 49558 / DSM 4304 / JCM 9628 / NBRC 100126 / VC-16).